Consider the following 267-residue polypeptide: Small ribosomal subunit protein uS3 (267 aa).

Residues 43 to 111 (IRKAMSKDLE…QVQLNIFEVK (69 aa)) enclose the KH type-2 domain. The segment at 216–267 (FEEQQAQQSNNRQGRRGDRRPRRGQRNAAPQQNAAAEAPAAAEAPAATETKE) is disordered. Residues 228–240 (QGRRGDRRPRRGQ) are compositionally biased toward basic residues. Low complexity predominate over residues 241–267 (RNAAPQQNAAAEAPAAAEAPAATETKE).

Belongs to the universal ribosomal protein uS3 family. In terms of assembly, part of the 30S ribosomal subunit. Forms a tight complex with proteins S10 and S14.

Binds the lower part of the 30S subunit head. Binds mRNA in the 70S ribosome, positioning it for translation. This chain is Small ribosomal subunit protein uS3, found in Bifidobacterium adolescentis (strain ATCC 15703 / DSM 20083 / NCTC 11814 / E194a).